The following is a 212-amino-acid chain: MSGLFITFEGPEGAGKTTVLQEMKEILSAEGLPVTATREPGGIDIAEQIREVILNKNNTLMDAKTEALLYAAARRQHLAEKVQPALKEGRIVLCDRFIDSSLAYQGYARGLGIDEVLSINQFAIGDTMPDVTIYFSIEPEEGLKRITSNDSREKNRLDLEALHFHTKVREGYQKVMQRFPERFHTIDASKKKELVIQDALQVINEALKKIQL.

Glycine 10–threonine 17 is an ATP binding site.

The protein belongs to the thymidylate kinase family.

The enzyme catalyses dTMP + ATP = dTDP + ADP. Phosphorylation of dTMP to form dTDP in both de novo and salvage pathways of dTTP synthesis. In Bacillus velezensis (strain DSM 23117 / BGSC 10A6 / LMG 26770 / FZB42) (Bacillus amyloliquefaciens subsp. plantarum), this protein is Thymidylate kinase.